The following is a 2364-amino-acid chain: Cytotoxin-L (2364 aa).

The interval 1–91 is four-helical bundle; the sequence is MSLVNKAQLQ…EVLELKNNSL (91 aa). In terms of domain architecture, GT44 spans 96 to 468; the sequence is KNLHFIWIGG…APDVRSTINL (373 aa). The glucosyltransferase region stretch occupies residues 96–468; that stretch reads KNLHFIWIGG…APDVRSTINL (373 aa). Residues 101–103, asparagine 139, 265–270, and 286–288 each bind UDP-alpha-D-glucose; these read IWI, LAAASD, and DVD. Mg(2+) contacts are provided by aspartate 288, glutamate 515, and serine 518. 518 to 520 serves as a coordination point for UDP-alpha-D-glucose; that stretch reads SLW. The interval 544 to 799 is autoprocessing region; that stretch reads GEDDILDFSQ…KSKNLHELST (256 aa). Residues glutamate 545 and aspartate 546 each contribute to the Zn(2+) site. One can recognise a Peptidase C80 domain in the interval 567–774; sequence SSSMRTPNKE…EESIIKDISS (208 aa). 3 residues coordinate 1D-myo-inositol hexakisphosphate: tyrosine 577, lysine 600, and lysine 647. Histidine 653 lines the Zn(2+) pocket. Residue histidine 653 is the For protease activity of the active site. The active-site Nucleophile; for protease activity is cysteine 698. Residue histidine 757 participates in Zn(2+) binding. 1D-myo-inositol hexakisphosphate-binding residues include lysine 764, lysine 775, and lysine 792. The translocation region stretch occupies residues 800-1500; it reads LLQEIKNNSN…ESIIRNIYMP (701 aa). 5 interaction with host SEMA6A and SEMA6B regions span residues 1433–1438, 1466–1471, 1484–1495, 1504–1511, and 1596–1601; these read CIKLIE, DNETKY, FTAEFSNESIIR, NLFIYSSK, and YNNLDP. Cell wall-binding repeat units lie at residues 1833–1852, 1854–1873, 1876–1895, 1926–1945, 1946–1965, 1967–1986, 1987–2006, 2007–2026, 2057–2076, 2077–2097, 2099–2118, 2119–2138, 2139–2158, 2209–2224, 2227–2249, 2250–2269, 2270–2289, 2320–2339, and 2340–2359; these read VSGLIYINDSLYYFKPPKNN, ITGFTTIDDNKYYFDPTKSG, SIGEITIDGKDYYFNKQGIL, FIGKLNIDGKIYYFEDNYRA, AVEWKSLDGETYYFNPKTGE, LKGLHQIGDNKYYFDNNGIM, QTGFITINDKVFYFNNDGVM, QVGYIEVNGKYFYFGKNGER, YNGILNFNGKIYFFDISNTA, VVGWGILDDGSTYYFDDNTAE, CIGLTVINDCKYYFDDNGIR, QLGFITINDNIFYFSESGKI, ELGYQNINGNYFYIDESGLV, ETGWIENETDKYYFDP, KKAYKGINVVDDIKYYFDENGIM, KTGLISFENNNYYFNEDGKM, QFGYLNIKDKMFYFGKDGKM, YTGWLDLDGKRYYFTDEYIA, and ATSSLTIDGYNYYFDPDTAE. A receptor-binding (CROPS) region region spans residues 1835–2364; sequence GLIYINDSLY…PDTAELVVSE (530 aa).

This sequence belongs to the clostridial glucosylating toxin (LCGT) family. As to quaternary structure, homomultimer; forms an inactive homomultimer at pH 8, which dissociates at pH 4, leading to cytotoxicity. Interacts with host SEMA6A; interaction promotes toxin entry into host cell. Interacts with host SEMA6B; interaction promotes toxin entry into host cell. The cofactor is Zn(2+). Mn(2+) is required as a cofactor. Requires Mg(2+) as cofactor. Undergoes autocatalytic cleavage to release the N-terminal part (Glucosyltransferase TcsL), which constitutes the active part of the toxin, in the host cytosol. 1D-myo-inositol hexakisphosphate-binding (InsP6) activates the peptidase C80 domain and promotes autoprocessing.

Its subcellular location is the secreted. The protein resides in the host endosome membrane. It localises to the host cytoplasm. It is found in the host cytosol. The protein localises to the host cell membrane. The enzyme catalyses L-threonyl-[protein] + UDP-alpha-D-glucose = 3-O-(alpha-D-glucosyl)-L-threonyl-[protein] + UDP + H(+). Protease activity is activated upon binding to 1D-myo-inositol hexakisphosphate (InsP6), which induces conformational reorganization. Precursor of a cytotoxin that targets the vascular endothelium, inducing an anti-inflammatory effect and resulting in lethal toxic shock syndrome. TcsL constitutes the main toxin that mediates the pathology of P.sordellii infection, an anaerobic Gram-positive bacterium found in soil and in the gastrointestinal and vaginal tracts of animals and humans; although the majority of carriers are asymptomatic, pathogenic P.sordellii infections arise rapidly and are highly lethal. This form constitutes the precursor of the toxin: it enters into host cells and mediates autoprocessing to release the active toxin (Glucosyltransferase TcsL) into the host cytosol. Targets vascular endothelium by binding to the semaphorin proteins SEMA6A and SEMA6B, and enters host cells via clathrin-mediated endocytosis. Once entered into host cells, acidification in the endosome promotes the membrane insertion of the translocation region and formation of a pore, leading to translocation of the GT44 and peptidase C80 domains across the endosomal membrane. This activates the peptidase C80 domain and autocatalytic processing, releasing the N-terminal part (Glucosyltransferase TcsL), which constitutes the active part of the toxin, in the cytosol. Functionally, active form of the toxin, which is released into the host cytosol following autoprocessing and inactivates small GTPases. Acts by mediating monoglucosylation of small GTPases of the Ras (H-Ras/HRAS, K-Ras/KRAS and N-Ras/NRAS) family in host cells at the conserved threonine residue located in the switch I region ('Thr-37/35'), using UDP-alpha-D-glucose as the sugar donor. Does not catalyze monoglucosylation of Ral/RALA. Also able to catalyze monoglucosylation of some members of the Rho family (Rac1 and Rap2A), but with less efficiency than with Ras proteins. Monoglucosylation of host small GTPases completely prevents the recognition of the downstream effector, blocking the GTPases in their inactive form and leading to apoptosis. Induces an anti-inflammatory effect, mainly by inactivating Ras proteins which results in blockage of the cell cycle and killing of immune cells. The absence or moderate local inflammatory response allows C.sordellii spreading in deep tissues, production of toxin which is released in the general circulation and causes a toxic shock syndrome. The protein is Cytotoxin-L of Paraclostridium sordellii (Clostridium sordellii).